Here is a 105-residue protein sequence, read N- to C-terminus: Early nodulin-93 (105 aa).

Residues 66 to 83 form a helical membrane-spanning segment; it reads TAQALIISTATAAAYFIV.

It is found in the membrane. The sequence is that of Early nodulin-93 from Glycine max (Soybean).